A 215-amino-acid polypeptide reads, in one-letter code: Probable transaldolase (215 aa).

The active-site Schiff-base intermediate with substrate is the Lys-83.

It belongs to the transaldolase family. Type 3B subfamily.

It localises to the cytoplasm. The enzyme catalyses D-sedoheptulose 7-phosphate + D-glyceraldehyde 3-phosphate = D-erythrose 4-phosphate + beta-D-fructose 6-phosphate. The protein operates within carbohydrate degradation; pentose phosphate pathway; D-glyceraldehyde 3-phosphate and beta-D-fructose 6-phosphate from D-ribose 5-phosphate and D-xylulose 5-phosphate (non-oxidative stage): step 2/3. Transaldolase is important for the balance of metabolites in the pentose-phosphate pathway. In Heliobacterium modesticaldum (strain ATCC 51547 / Ice1), this protein is Probable transaldolase.